The following is a 279-amino-acid chain: Pantothenate synthetase (279 aa).

Residue 26–33 participates in ATP binding; the sequence is MGNLHEGH. Histidine 33 functions as the Proton donor in the catalytic mechanism. Glutamine 57 lines the (R)-pantoate pocket. Glutamine 57 is a binding site for beta-alanine. 144 to 147 is an ATP binding site; the sequence is GKKD. A (R)-pantoate-binding site is contributed by glutamine 150. ATP contacts are provided by residues valine 173 and 181-184; that span reads LSSR.

It belongs to the pantothenate synthetase family. In terms of assembly, homodimer.

Its subcellular location is the cytoplasm. The catalysed reaction is (R)-pantoate + beta-alanine + ATP = (R)-pantothenate + AMP + diphosphate + H(+). It functions in the pathway cofactor biosynthesis; (R)-pantothenate biosynthesis; (R)-pantothenate from (R)-pantoate and beta-alanine: step 1/1. Catalyzes the condensation of pantoate with beta-alanine in an ATP-dependent reaction via a pantoyl-adenylate intermediate. The chain is Pantothenate synthetase from Burkholderia cenocepacia (strain ATCC BAA-245 / DSM 16553 / LMG 16656 / NCTC 13227 / J2315 / CF5610) (Burkholderia cepacia (strain J2315)).